An 863-amino-acid polypeptide reads, in one-letter code: Leucine--tRNA ligase (863 aa).

Residues 42–52 (PYPSGKIHMGH) carry the 'HIGH' region motif. The 'KMSKS' region motif lies at 618–622 (KMSKS). Lys-621 is an ATP binding site.

The protein belongs to the class-I aminoacyl-tRNA synthetase family.

The protein localises to the cytoplasm. It catalyses the reaction tRNA(Leu) + L-leucine + ATP = L-leucyl-tRNA(Leu) + AMP + diphosphate. This Desulforapulum autotrophicum (strain ATCC 43914 / DSM 3382 / VKM B-1955 / HRM2) (Desulfobacterium autotrophicum) protein is Leucine--tRNA ligase.